The sequence spans 418 residues: Serine hydroxymethyltransferase (418 aa).

(6S)-5,6,7,8-tetrahydrofolate is bound by residues L121 and 125–127 (GHL). K230 is subject to N6-(pyridoxal phosphate)lysine. 356–358 (SPF) serves as a coordination point for (6S)-5,6,7,8-tetrahydrofolate.

It belongs to the SHMT family. As to quaternary structure, homodimer. Pyridoxal 5'-phosphate is required as a cofactor.

It is found in the cytoplasm. The enzyme catalyses (6R)-5,10-methylene-5,6,7,8-tetrahydrofolate + glycine + H2O = (6S)-5,6,7,8-tetrahydrofolate + L-serine. It participates in one-carbon metabolism; tetrahydrofolate interconversion. It functions in the pathway amino-acid biosynthesis; glycine biosynthesis; glycine from L-serine: step 1/1. Functionally, catalyzes the reversible interconversion of serine and glycine with tetrahydrofolate (THF) serving as the one-carbon carrier. This reaction serves as the major source of one-carbon groups required for the biosynthesis of purines, thymidylate, methionine, and other important biomolecules. Also exhibits THF-independent aldolase activity toward beta-hydroxyamino acids, producing glycine and aldehydes, via a retro-aldol mechanism. This chain is Serine hydroxymethyltransferase, found in Shewanella pealeana (strain ATCC 700345 / ANG-SQ1).